A 329-amino-acid chain; its full sequence is DNA-directed RNA polymerase subunit alpha (329 aa).

The alpha N-terminal domain (alpha-NTD) stretch occupies residues 1 to 234 (MQGSVTEFLK…EQLDAFVELR (234 aa)). The segment at 248-329 (FDPILLRPVD…WPPASLADDL (82 aa)) is alpha C-terminal domain (alpha-CTD).

It belongs to the RNA polymerase alpha chain family. In terms of assembly, homodimer. The RNAP catalytic core consists of 2 alpha, 1 beta, 1 beta' and 1 omega subunit. When a sigma factor is associated with the core the holoenzyme is formed, which can initiate transcription.

It carries out the reaction RNA(n) + a ribonucleoside 5'-triphosphate = RNA(n+1) + diphosphate. Functionally, DNA-dependent RNA polymerase catalyzes the transcription of DNA into RNA using the four ribonucleoside triphosphates as substrates. In Shewanella loihica (strain ATCC BAA-1088 / PV-4), this protein is DNA-directed RNA polymerase subunit alpha.